Here is a 565-residue protein sequence, read N- to C-terminus: Probable protease Gilli_2517 (565 aa).

Probably a dedicated protease for substrate gasdermin bGSDM; cleaves the bGSDM precursor, releasing the pore-forming moiety, which integrates into the membrane and triggers cell death. Involved in defense against bacteriophages. Expression of bGSDM and this neighboring protease is not toxic in E.coli. The sequence is that of Probable protease Gilli_2517 from Gillisia limnaea (strain DSM 15749 / LMG 21470 / R-8282).